Here is a 249-residue protein sequence, read N- to C-terminus: Triosephosphate isomerase (249 aa).

Residue 9–11 (NWK) participates in substrate binding. The active-site Electrophile is His95. Residue Glu166 is the Proton acceptor of the active site. Substrate-binding positions include Gly172, Ser211, and 232-233 (GG).

The protein belongs to the triosephosphate isomerase family. In terms of assembly, homodimer.

Its subcellular location is the cytoplasm. The enzyme catalyses D-glyceraldehyde 3-phosphate = dihydroxyacetone phosphate. It functions in the pathway carbohydrate biosynthesis; gluconeogenesis. It participates in carbohydrate degradation; glycolysis; D-glyceraldehyde 3-phosphate from glycerone phosphate: step 1/1. Functionally, involved in the gluconeogenesis. Catalyzes stereospecifically the conversion of dihydroxyacetone phosphate (DHAP) to D-glyceraldehyde-3-phosphate (G3P). The polypeptide is Triosephosphate isomerase (Legionella pneumophila (strain Paris)).